The primary structure comprises 1212 residues: DNA-directed RNA polymerase subunit beta'' (1212 aa).

Residues cysteine 229, cysteine 302, cysteine 309, and cysteine 312 each contribute to the Zn(2+) site. Residues 1162–1212 form a disordered region; the sequence is QKETSKNKKETSKNKKETSKNKKETSKNKKETSKNKKETSKNKKEASKNKK.

This sequence belongs to the RNA polymerase beta' chain family. RpoC2 subfamily. As to quaternary structure, in plastids the minimal PEP RNA polymerase catalytic core is composed of four subunits: alpha, beta, beta', and beta''. When a (nuclear-encoded) sigma factor is associated with the core the holoenzyme is formed, which can initiate transcription. The cofactor is Zn(2+).

The protein resides in the plastid. It is found in the chloroplast. The enzyme catalyses RNA(n) + a ribonucleoside 5'-triphosphate = RNA(n+1) + diphosphate. Its function is as follows. DNA-dependent RNA polymerase catalyzes the transcription of DNA into RNA using the four ribonucleoside triphosphates as substrates. The sequence is that of DNA-directed RNA polymerase subunit beta'' from Cryptomeria japonica (Japanese cedar).